The chain runs to 627 residues: Asparagine synthetase domain-containing protein 1 (627 aa).

Catalysis depends on Cys-2, which acts as the For GATase activity. The region spanning 2-184 (CGICCSVSFS…ASGIFQIDLN (183 aa)) is the Glutamine amidotransferase type-2 domain. The Asparagine synthetase domain occupies 308–597 (ASKEVLKTCS…GLPASALLPK (290 aa)). The tract at residues 373–404 (QQNHHEIPSEESSQSPAADEGPGEAEVPDRVT) is disordered.

The polypeptide is Asparagine synthetase domain-containing protein 1 (Asnsd1) (Mus musculus (Mouse)).